A 342-amino-acid polypeptide reads, in one-letter code: Subtilisin-like serine protease Rho m 2.0101 (342 aa).

Positions threonine 1–asparagine 30 are cleaved as a propeptide — removed in mature form. In terms of domain architecture, Inhibitor I9 spans threonine 1–asparagine 30. The 304-residue stretch at proline 39–histidine 342 folds into the Peptidase S8 domain. Catalysis depends on charge relay system residues aspartate 75 and histidine 107. N-linked (GlcNAc...) asparagine glycosylation is found at asparagine 137 and asparagine 171. The active-site Charge relay system is serine 267. Asparagine 335 carries N-linked (GlcNAc...) asparagine glycosylation.

It belongs to the peptidase S8 family.

Serine protease. The chain is Subtilisin-like serine protease Rho m 2.0101 from Rhodotorula mucilaginosa (Yeast).